The chain runs to 983 residues: Type IV secretion system protein CagE (983 aa).

597–604 (GSTGSGKT) contacts ATP.

It belongs to the TrbE/VirB4 family. Component of the Cag type IV secretion system, which is composed of a wheel-shaped outer membrane complex (OMC) and an inner membrane complex (IMC). Interacts with CagV and CagBeta.

It localises to the cell inner membrane. It catalyses the reaction ATP + H2O + cellular proteinSide 1 = ADP + phosphate + cellular proteinSide 2.. ATPase component of the type IV secretion system Cag (Cag-T4SS). Acts as a molecular motor to provide the energy that is required for the export of proteins. Required for CagA translocation and induction of IL-8 in host gastric epithelial cells. Plays a key role in Cag-T4SS pilus biogenesis, especially in the localization and stabilization of the pilus-associated components CagI, CagL and the surface protein CagH. Is also critical for assembly of the entire cytoplasmic portion of the Cag inner membrane complex (IMC). This Helicobacter pylori (strain ATCC 700392 / 26695) (Campylobacter pylori) protein is Type IV secretion system protein CagE.